The primary structure comprises 648 residues: Adhesion G-protein coupled receptor G1 (648 aa).

A signal peptide spans 1 to 24 (MKQNPAKTARMWIIICLLFVLGQA). Residues 25–370 (TDNDRDFKMC…STVRHLKALT (346 aa)) are Extracellular-facing. A disulfide bond links C34 and C96. N62, N91, N114, N146, N222, N262, and N286 each carry an N-linked (GlcNAc...) asparagine glycan. A disulfide bridge connects residues C127 and C176. The GAIN-B domain occupies 214–361 (MDEEFTGHNF…AILVQVEQKS (148 aa)). Intrachain disulfides connect C313–C343 and C331–C345. The segment at 313–361 (CVSWDTKQDNEVNWKDDGCDTVKINEEQTECHCNHLTYFAILVQVEQKS) is GPS. The interval 349–361 (TYFAILVQVEQKS) is stachel. The chain crosses the membrane as a helical span at residues 371–391 (FITAVGCAVSLVSCLVLFYWL). Topologically, residues 392–408 (CKRRRGKKNQISLVHRG) are cytoplasmic. A helical transmembrane segment spans residues 409-429 (LVVAIFLLCLFFILTGILANV). Topologically, residues 430 to 443 (ANETVCQLTGSLLH) are extracellular. N-linked (GlcNAc...) asparagine glycosylation is present at N431. The chain crosses the membrane as a helical span at residues 444–464 (YGLLSTLCWMAMEVFHTFLLV). Residues 465-471 (RKVFNSP) are Cytoplasmic-facing. The chain crosses the membrane as a helical span at residues 472-492 (LPIWIFYLMGFGFPFLLVSIL). Topologically, residues 493 to 530 (LSVGDIYGERKIKPSDDVNNPYRMCWMTEGDKSQLAHY) are extracellular. A helical membrane pass occupies residues 531–551 (IINIGLLAVVVSSGLVMLFLV). At 552 to 563 (VREIRNRPDWKK) the chain is on the cytoplasmic side. The helical transmembrane segment at 564–586 (IHVAFLSIWGLTCLYGTTWALGF) threads the bilayer. At 587–595 (LDFGPFSEV) the chain is on the extracellular side. The helical transmembrane segment at 596-618 (TLFLFCIINSLQGFFLMLRYYAL) threads the bilayer. The Cytoplasmic portion of the chain corresponds to 619 to 648 (ERMKKKDVSSSDGSSSGSSKQHMLQTNEKS).

The protein belongs to the G-protein coupled receptor 2 family. LN-TM7 subfamily. As to quaternary structure, heterodimer of 2 chains generated by proteolytic processing; the large extracellular N-terminal fragment (ADGRG1 NT) and the membrane-bound C-terminal fragment (ADGRG1-CT) predominantly remain associated and non-covalently linked. Autoproteolytically cleaved into 2 fragments; the large extracellular N-terminal fragment (ADGRG1 NT) and the membrane-bound C-terminal fragment (ADGRG1 CT) predominantly remain associated and non-covalently linked.

It is found in the cell membrane. Its activity is regulated as follows. Forms a heterodimer of 2 chains generated by proteolytic processing that remain associated through non-covalent interactions mediated by the GAIN-B domain. In the inactivated receptor, the Stachel sequence (also named stalk) is embedded in the GAIN-B domain, where it adopts a beta-strand conformation. On activation, the Stachel moves into the 7 transmembrane region and adopts a twisted hook-shaped configuration that forms contacts within the receptor, leading to coupling of a G-alpha protein, which activates signaling. The cleaved GAIN-B and N-terminal domains can then dissociate from the rest of the receptor. In terms of biological role, adhesion G-protein coupled receptor (aGPCR), which is involved in oligodendrocyte development and maintenance of peripheral myelin. Ligand binding causes a conformation change that triggers signaling via guanine nucleotide-binding proteins (G proteins) and modulates the activity of downstream effectors, such as RhoA pathway. Adgrg1 is coupled to G(12) and/or G(13) G proteins (gna12 and gna13, respectively) and mediates the activation Rho small GTPases. Adgrg1-dependent RhoA signaling promotes timely radial sorting of axons. Required to establish proper myelin thickness and facilitate organization of the myelin sheath in the mature peripheral nervous system. The protein is Adhesion G-protein coupled receptor G1 of Danio rerio (Zebrafish).